The following is a 545-amino-acid chain: Germacrene D synthase 1 (545 aa).

Positions 298, 302, 443, and 451 each coordinate Mg(2+). Positions 298-302 (DDTFD) match the DDXXD motif motif.

It belongs to the terpene synthase family. Mg(2+) serves as cofactor.

It localises to the cytoplasm. The protein localises to the cytosol. It carries out the reaction (2E,6E)-farnesyl diphosphate = (-)-germacrene D + diphosphate. The protein operates within secondary metabolite biosynthesis; terpenoid biosynthesis. In terms of biological role, sesquiterpene synthase involved in germacrene D biosynthesis. Also produces at least 13 additional sesquiterpene products, including germacrene C and (+)-germacrene A, beta-ylangene, (E)-beta-farnesene and (E,E)-alpha-farnesene. The polypeptide is Germacrene D synthase 1 (Pogostemon cablin (Patchouli)).